We begin with the raw amino-acid sequence, 155 residues long: Ribosome-binding factor A (155 aa).

Basic and acidic residues-rich tracts occupy residues 116-125 (ARQRDQEVAR) and 142-155 (SPHE…ADGW). Residues 116–155 (ARQRDQEVARQAEGATPAGDANPYKTSPHEGRPESEADGW) form a disordered region.

Belongs to the RbfA family. As to quaternary structure, monomer. Binds 30S ribosomal subunits, but not 50S ribosomal subunits or 70S ribosomes.

The protein localises to the cytoplasm. Functionally, one of several proteins that assist in the late maturation steps of the functional core of the 30S ribosomal subunit. Associates with free 30S ribosomal subunits (but not with 30S subunits that are part of 70S ribosomes or polysomes). Required for efficient processing of 16S rRNA. May interact with the 5'-terminal helix region of 16S rRNA. The polypeptide is Ribosome-binding factor A (Corynebacterium kroppenstedtii (strain DSM 44385 / JCM 11950 / CIP 105744 / CCUG 35717)).